A 503-amino-acid chain; its full sequence is Ent-kaurene oxidase-like 5 (503 aa).

The chain crosses the membrane as a helical span at residues G8–V28. C448 serves as a coordination point for heme.

Belongs to the cytochrome P450 family. Heme is required as a cofactor. Expressed in roots.

The protein localises to the membrane. Functionally, may hydroxylate diterpenes. The chain is Ent-kaurene oxidase-like 5 from Oryza sativa subsp. japonica (Rice).